The primary structure comprises 191 residues: Protein Ves (191 aa).

The protein belongs to the Ves family.

In Escherichia coli O139:H28 (strain E24377A / ETEC), this protein is Protein Ves.